A 156-amino-acid chain; its full sequence is Small ribosomal subunit protein uS7 (156 aa).

Belongs to the universal ribosomal protein uS7 family. Part of the 30S ribosomal subunit. Contacts proteins S9 and S11.

Its function is as follows. One of the primary rRNA binding proteins, it binds directly to 16S rRNA where it nucleates assembly of the head domain of the 30S subunit. Is located at the subunit interface close to the decoding center, probably blocks exit of the E-site tRNA. The sequence is that of Small ribosomal subunit protein uS7 from Shewanella sp. (strain MR-7).